A 271-amino-acid polypeptide reads, in one-letter code: Metal-staphylopine import system ATP-binding protein CntD (271 aa).

Residues 6–251 enclose the ABC transporter domain; it reads VKHLTITDTW…PEHVYTKYLL (246 aa). ATP is bound at residue 38–45; sequence GESGSGKS.

The protein belongs to the ABC transporter superfamily. In terms of assembly, the complex is composed of two ATP-binding proteins (CntD and CntF), two transmembrane proteins (CntB and CntC) and a solute-binding protein (CntA).

The protein localises to the cell membrane. Functionally, part of the ABC transporter complex CntABCDF (Opp1) involved in the uptake of metal in complex with the metallophore staphylopine (StP). May be involved in the import of a large array of divalent metals ions such as nickel, cobalt, zinc, copper and iron. Probably responsible for energy coupling to the transport system. The protein is Metal-staphylopine import system ATP-binding protein CntD of Staphylococcus aureus (strain Mu50 / ATCC 700699).